A 1005-amino-acid chain; its full sequence is Beta/gamma crystallin domain-containing protein 3 (1005 aa).

5 positions are modified to phosphoserine: serine 122, serine 129, serine 130, serine 136, and serine 140. 2 disordered regions span residues 132 to 159 (EDVLSSEVSPGHHGSSKSRESANQPSSV) and 173 to 198 (NFDGDDRQEAEEEEEEAVASGKDWRT). Positions 180–189 (QEAEEEEEEA) are enriched in acidic residues. Beta/gamma crystallin 'Greek key' domains follow at residues 367 to 416 (GCWI…KRVL), 462 to 500 (GVWLAYPDIHFKGQATILEEDQGLFEISAAEMKSLHPLQ), 512 to 556 (LKVI…RVIG), 557 to 599 (GVWV…RYLQ), 605 to 647 (SSIT…HVKS), 648 to 690 (GVWV…RPIQ), 701 to 737 (HLLKAFSKAGFQGECIDFVKECADLTSFTPASFKVLR), 738 to 781 (GCWL…QPID), and 828 to 869 (GLWI…RPMK). The Ricin B-type lectin domain occupies 871–1003 (PAVYIRIRNR…GEETQKWDIE (133 aa)).

The protein belongs to the beta/gamma-crystallin family.

The polypeptide is Beta/gamma crystallin domain-containing protein 3 (Crybg3) (Mus musculus (Mouse)).